The chain runs to 104 residues: Thioredoxin-2 (104 aa).

In terms of domain architecture, Thioredoxin spans 2–104 (VTQLKSASEY…AIKQAIASNV (103 aa)). Active-site nucleophile residues include Cys31 and Cys34. Cysteines 31 and 34 form a disulfide. Ser62 is subject to Phosphoserine. Glycyl lysine isopeptide (Lys-Gly) (interchain with G-Cter in ubiquitin) cross-links involve residues Lys67 and Lys97.

It belongs to the thioredoxin family. As to quaternary structure, monomer. Part of the heterodimeric LMA1 complex together with the proteinase inhibitor PBI2. LMA1 binds to the ATPase SEC18. Post-translationally, reversible disulfide bond formation between Cys-31 and Cys-34, reverted by thioredoxin reductase TRR1 using NADPH as hydrogen donor.

It is found in the cytoplasm. The protein resides in the golgi apparatus membrane. It localises to the nucleus. Functionally, participates as a hydrogen donor in redox reactions through the reversible oxidation of its active center dithiol to a disulfide, accompanied by the transfer of 2 electrons and 2 protons. It is involved in many cellular processes, including deoxyribonucleotide synthesis, repair of oxidatively damaged proteins, protein folding, sulfur metabolism, and redox homeostasis. Thioredoxin-dependent enzymes include phosphoadenosine-phosphosulfate reductase MET16, alkyl-hydroperoxide reductase DOT5, thioredoxin peroxidases TSA1 and TSA2, alkyl hydroperoxide reductase AHP1, and peroxiredoxin HYR1. Thioredoxin is also involved in protection against reducing stress. As part of the LMA1 complex, it is involved in the facilitation of vesicle fusion such as homotypic vacuole and ER-derived COPII vesicle fusion with the Golgi. This activity does not require the redox mechanism. Through its capacity to inactivate the stress response transcription factor YAP1 and its regulator the hydroperoxide stress sensor HYR1, it is involved in feedback regulation of stress response gene expression upon oxidative stress. The protein is Thioredoxin-2 (TRX2) of Saccharomyces cerevisiae (strain ATCC 204508 / S288c) (Baker's yeast).